We begin with the raw amino-acid sequence, 637 residues long: MAHYNFKKITVVPSAKDFIDLTLSKTQRKTPTVIHKHYQIHRIRHFYMRKVKFTQQNYHDRLSQILSDFPKLDDIHPFYADLMNILYDKDHYKLALGQINIAKNLVDNVAKDYVRLMKYGDSLYRCKQLKRAALGRMCTIIKRQRQSLEYLEQVRQHLSRLPTIDPNTRTLLLCGYPNVGKSSFINKVTRADVDVQPYAFTTKSLFVGHVDYKYLRWQVVDTPGILDHPLEDRNTIEMQAITALAHLRAAVLYVMDLSEQCGHGLKEQLGLFQNIRPLFINKPLIVVASKCEVKRIAELSEEDQKIFLDLQAEGFPVIETSTLTEEGVIQVKTEACDRLLAHRVETKMKGNKVNEVLNRLHLAVPNKRDDKERPPFIPEGVVARRKRMEIAEPKKKRERDLELEMGDDYILDLQKYWDLMNSSEKYDKIPEIWEGHNAADYIDPAIMKKLEELEKGKKSSEQLLGSMPVSLRVKTRKWWKIRQLAKQIREKKKLKILQSKEKNTQGPRMPRTAKKVQRADLENEMRSLGVDMDDKDNAHYAVRARRSRSVTRKRKREESVPPSSIARSRSRSCSKTPRDVSGLRDVKMVKKAKTMMKKAQKKMNRLGKKGEADRHVFDMKPKHLLSGKRKAGKKERR.

Ala-2 is subject to N-acetylalanine. Lys-103 carries the N6-acetyllysine; alternate modification. Lys-103 is covalently cross-linked (Glycyl lysine isopeptide (Lys-Gly) (interchain with G-Cter in SUMO2); alternate). Ser-122 is subject to Phosphoserine. In terms of domain architecture, OBG-type G spans 169–340; sequence RTLLLCGYPN…VKTEACDRLL (172 aa). GTP is bound by residues 175-182, 221-225, and 289-292; these read GYPNVGKS, DTPGI, and SKCE. Lys-332 is covalently cross-linked (Glycyl lysine isopeptide (Lys-Gly) (interchain with G-Cter in SUMO2)). 2 disordered regions span residues 499 to 518 and 525 to 637; these read SKEK…KVQR and MRSL…KERR. A Glycyl lysine isopeptide (Lys-Gly) (interchain with G-Cter in SUMO2) cross-link involves residue Lys-535. A compositionally biased stretch (basic residues) spans 542-555; sequence VRARRSRSVTRKRK. Ser-559 carries the post-translational modification Phosphoserine. A compositionally biased stretch (low complexity) spans 563-574; that stretch reads SSIARSRSRSCS. The segment covering 576 to 588 has biased composition (basic and acidic residues); sequence TPRDVSGLRDVKM. Positions 589-607 are enriched in basic residues; the sequence is VKKAKTMMKKAQKKMNRLG. The segment covering 608 to 621 has biased composition (basic and acidic residues); the sequence is KKGEADRHVFDMKP. Over residues 622–637 the composition is skewed to basic residues; sequence KHLLSGKRKAGKKERR.

The protein belongs to the TRAFAC class OBG-HflX-like GTPase superfamily. OBG GTPase family. NOG subfamily. Associates with pre-60S ribosomal particles. Interacts with MINAS-60 (product of an alternative open reading frame of RBM10).

It is found in the nucleus. It localises to the nucleolus. Its function is as follows. Involved in the biogenesis of the 60S ribosomal subunit. Acts as TP53 repressor, preventing TP53 stabilization and cell cycle arrest. This Rattus norvegicus (Rat) protein is GTP-binding protein 4 (Gtpbp4).